The primary structure comprises 207 residues: NADH-quinone oxidoreductase subunit C (207 aa).

The protein belongs to the complex I 30 kDa subunit family. In terms of assembly, NDH-1 is composed of 14 different subunits. Subunits NuoB, C, D, E, F, and G constitute the peripheral sector of the complex.

The protein resides in the cell inner membrane. The catalysed reaction is a quinone + NADH + 5 H(+)(in) = a quinol + NAD(+) + 4 H(+)(out). NDH-1 shuttles electrons from NADH, via FMN and iron-sulfur (Fe-S) centers, to quinones in the respiratory chain. The immediate electron acceptor for the enzyme in this species is believed to be ubiquinone. Couples the redox reaction to proton translocation (for every two electrons transferred, four hydrogen ions are translocated across the cytoplasmic membrane), and thus conserves the redox energy in a proton gradient. The protein is NADH-quinone oxidoreductase subunit C of Thermus thermophilus (strain ATCC BAA-163 / DSM 7039 / HB27).